The sequence spans 328 residues: UPF0421 protein SAV1889 (328 aa).

4 helical membrane passes run 19–39 (IAIF…IYAI), 61–81 (LPAT…FGDQ), 108–128 (VAVL…IFNF), and 132–152 (TLTA…VFPP).

This sequence belongs to the UPF0421 family.

Its subcellular location is the cell membrane. This is UPF0421 protein SAV1889 from Staphylococcus aureus (strain Mu50 / ATCC 700699).